The sequence spans 413 residues: Putative competence-damage inducible protein (413 aa).

Belongs to the CinA family.

The protein is Putative competence-damage inducible protein of Desulforudis audaxviator (strain MP104C).